The primary structure comprises 239 residues: Isopentenyl-diphosphate Delta-isomerase (239 aa).

K43 provides a ligand contact to substrate. Mg(2+) contacts are provided by H47 and H58. Positions 56–210 (LLHRAFSIFL…KVKVTPWFRL (155 aa)) constitute a Nudix hydrolase domain. Substrate contacts are provided by R77 and K81. C93 is an active-site residue. Residue S94 participates in substrate binding. The Mg(2+) site is built by E156 and E158. The active site involves E158.

Belongs to the IPP isomerase type 1 family. Mg(2+) serves as cofactor.

It carries out the reaction isopentenyl diphosphate = dimethylallyl diphosphate. It participates in isoprenoid biosynthesis; dimethylallyl diphosphate biosynthesis; dimethylallyl diphosphate from isopentenyl diphosphate: step 1/1. Catalyzes the 1,3-allylic rearrangement of the homoallylic substrate isopentenyl (IPP) to its highly electrophilic allylic isomer, dimethylallyl diphosphate (DMAPP). This is Isopentenyl-diphosphate Delta-isomerase (ipi) from Dictyostelium discoideum (Social amoeba).